Reading from the N-terminus, the 183-residue chain is uncharacterized protein (183 aa).

The N-terminal stretch at 1-23 is a signal peptide; the sequence is MSAFKKSLLVAGVAMILSNNVFA. Cysteine 41 and cysteine 80 form a disulfide bridge.

The protein belongs to the fimbrial protein family.

The protein localises to the fimbrium. This is an uncharacterized protein from Escherichia coli (strain K12).